Reading from the N-terminus, the 81-residue chain is Large ribosomal subunit protein bL27 (81 aa).

Residues 1–11 (MATSKSGGSSK) are compositionally biased toward polar residues. Residues 1–26 (MATSKSGGSSKNGRDSISKRLGVKRS) are disordered.

This sequence belongs to the bacterial ribosomal protein bL27 family.

The protein is Large ribosomal subunit protein bL27 of Borrelia turicatae (strain 91E135).